Reading from the N-terminus, the 672-residue chain is UvrABC system protein B (672 aa).

The Helicase ATP-binding domain occupies 26 to 181 (AGLEDGLAYQ…ILQRLAELQY (156 aa)). Residue 39 to 46 (GVTGSGKT) participates in ATP binding. The Beta-hairpin signature appears at 92-115 (YYDYYQPEAYVPSSDTYIEKDASI). A Helicase C-terminal domain is found at 430–592 (QVDDLLSEIK…ITPKSIQKAV (163 aa)). The 36-residue stretch at 631-666 (AKELRKLEEQMYHHARNLEFEEAAAVRDKIQHIRKG) folds into the UVR domain.

Belongs to the UvrB family. As to quaternary structure, forms a heterotetramer with UvrA during the search for lesions. Interacts with UvrC in an incision complex.

The protein resides in the cytoplasm. In terms of biological role, the UvrABC repair system catalyzes the recognition and processing of DNA lesions. A damage recognition complex composed of 2 UvrA and 2 UvrB subunits scans DNA for abnormalities. Upon binding of the UvrA(2)B(2) complex to a putative damaged site, the DNA wraps around one UvrB monomer. DNA wrap is dependent on ATP binding by UvrB and probably causes local melting of the DNA helix, facilitating insertion of UvrB beta-hairpin between the DNA strands. Then UvrB probes one DNA strand for the presence of a lesion. If a lesion is found the UvrA subunits dissociate and the UvrB-DNA preincision complex is formed. This complex is subsequently bound by UvrC and the second UvrB is released. If no lesion is found, the DNA wraps around the other UvrB subunit that will check the other stand for damage. The protein is UvrABC system protein B of Coxiella burnetii (strain CbuG_Q212) (Coxiella burnetii (strain Q212)).